We begin with the raw amino-acid sequence, 494 residues long: Ceramide glucosyltransferase (494 aa).

At 1-6 the chain is on the lumenal side; it reads MPLLMD. The chain crosses the membrane as a helical span at residues 7-27; that stretch reads GLAYAGAIWSLIVFCVQAIGL. Residues 28–337 lie on the Cytoplasmic side of the membrane; it reads YQLFRSYSRP…VRWLRVRKWT (310 aa). Residue aspartate 95 is a short sequence motif, D1. A short sequence motif (D2) is located at residue aspartate 160. A short sequence motif (D3) is located at residue aspartate 285. The Proton acceptor role is filled by aspartate 285. A (Q/R)XXRW motif is present at residues 326–330; that stretch reads RRVRW. Residues 338-358 traverse the membrane as a helical segment; sequence VLLATLVEPGVESMVCCMAFA. Over 359–380 the chain is Lumenal; the sequence is HALTTTPWCPNPADWPIPHTWT. A helical transmembrane segment spans residues 381–401; it reads ALWSIWLAAIAVWATLDYVVY. Residues 402-428 are Cytoplasmic-facing; that stretch reads HFLHSCRSIEKDADSPDFAQGNELMKR. A helical membrane pass occupies residues 429–449; the sequence is PFGAWILAWIGREILALPIWT. Topologically, residues 450–494 are lumenal; sequence RAVLLGTTVTWRGTKFKVRPDQSVVDIPNAGAKSNGIGSTNRKVR.

This sequence belongs to the glycosyltransferase 2 family.

It localises to the golgi apparatus membrane. The catalysed reaction is an N-acylsphing-4-enine + UDP-alpha-D-glucose = a beta-D-glucosyl-(1&lt;-&gt;1')-N-acylsphing-4-enine + UDP + H(+). Its pathway is lipid metabolism; sphingolipid metabolism. Functionally, catalyzes the final step in the biosynthesis of the membrane lipid glucosylceramide (GluCer), the transfer of glucose to ceramide. Glucosylceramides play important roles in growth, differentiation and pathogenicity. The chain is Ceramide glucosyltransferase from Pyricularia oryzae (strain 70-15 / ATCC MYA-4617 / FGSC 8958) (Rice blast fungus).